A 434-amino-acid polypeptide reads, in one-letter code: Glycerol-3-phosphate acyltransferase 3 (434 aa).

The helical transmembrane segment at 14 to 34 threads the bilayer; it reads WLTLVLGFILLPSVFGVSLGI. Phosphoserine is present on residues Ser-68 and Ser-77. The next 2 membrane-spanning stretches (helical) occupy residues 137–157 and 161–181; these read ISLR…CVLL and VTLA…VGQL. The short motif at 229-234 is the HXXXXD motif element; sequence HTSPID.

This sequence belongs to the 1-acyl-sn-glycerol-3-phosphate acyltransferase family. In terms of tissue distribution, widely expressed. Expressed in liver, kidney, testis, brain, heart, skeletal muscle, thyroid, prostate, thymus and placenta. Also expressed lung and adipose tissue.

Its subcellular location is the endoplasmic reticulum membrane. The enzyme catalyses sn-glycerol 3-phosphate + an acyl-CoA = a 1-acyl-sn-glycero-3-phosphate + CoA. It carries out the reaction a 1-acyl-sn-glycero-3-phosphate + an acyl-CoA = a 1,2-diacyl-sn-glycero-3-phosphate + CoA. It catalyses the reaction dodecanoyl-CoA + sn-glycerol 3-phosphate = 1-dodecanoyl-sn-glycerol 3-phosphate + CoA. The catalysed reaction is sn-glycerol 3-phosphate + hexadecanoyl-CoA = 1-hexadecanoyl-sn-glycero-3-phosphate + CoA. The enzyme catalyses sn-glycerol 3-phosphate + (9Z)-octadecenoyl-CoA = 1-(9Z-octadecenoyl)-sn-glycero-3-phosphate + CoA. It carries out the reaction (9Z,12Z)-octadecadienoyl-CoA + sn-glycerol 3-phosphate = 1-(9Z,12Z)-octadecadienoyl-sn-glycero-3-phosphate + CoA. It catalyses the reaction 1-tetradecanoyl-sn-glycerol 3-phosphate + (9Z)-octadecenoyl-CoA = 1-tetradecanoyl-2-(9Z)-octadecenoyl-sn-glycero-3-phosphate + CoA. The catalysed reaction is 1-hexadecanoyl-sn-glycero-3-phosphate + (9Z)-octadecenoyl-CoA = 1-hexadecanoyl-2-(9Z-octadecenoyl)-sn-glycero-3-phosphate + CoA. The enzyme catalyses 1-(9Z-octadecenoyl)-sn-glycero-3-phosphate + (9Z)-octadecenoyl-CoA = 1,2-di-(9Z-octadecenoyl)-sn-glycero-3-phosphate + CoA. It carries out the reaction 1-(6Z,9Z,12Z-octadecatrienoyl)-sn-glycero-3-phosphate + (9Z)-octadecenoyl-CoA = (6Z,9Z,12Z)-octadecatrienoyl-2-(9Z)-octadecenoyl-sn-glycero-3-phosphate + CoA. It catalyses the reaction 1-(9Z,12Z,15Z)-octadecatrienoyl-sn-glycero-3-phosphate + (9Z)-octadecenoyl-CoA = 1-(9Z,12Z,15Z)-octadecatrienoyl-2-(9Z)-octadecenoyl-sn-glycero-3-phosphate + CoA. The catalysed reaction is 1-(9Z-octadecenoyl)-sn-glycero-3-phosphate + tetradecanoyl-CoA = 1-(9Z)-octadecenoyl-2-tetradecanoyl-sn-glycero-3-phosphate + CoA. The enzyme catalyses 1-(9Z-octadecenoyl)-sn-glycero-3-phosphate + hexadecanoyl-CoA = 1-(9Z)-octadecenoyl-2-hexadecanoyl-sn-glycero-3-phosphate + CoA. It carries out the reaction 1-(9Z-octadecenoyl)-sn-glycero-3-phosphate + octadecanoyl-CoA = 1-(9Z-octadecenoyl)-2-octadecanoyl-sn-glycero-3-phosphate + CoA. It catalyses the reaction 1-(9Z-octadecenoyl)-sn-glycero-3-phosphate + (9Z,12Z)-octadecadienoyl-CoA = 1-(9Z)-octadecenoyl-2-(9Z,12Z)-octadecadienoyl-sn-glycero-3-phosphate + CoA. The catalysed reaction is 1-(5Z,8Z,11Z,14Z-eicosatetraenoyl)-sn-glycero-3-phosphate + (9Z)-octadecenoyl-CoA = 1-(5Z,8Z,11Z,14Z)-eicosatetraenoyl-2-(9Z)-octadecenoyl-sn-glycero-3-phosphate + CoA. The protein operates within glycerolipid metabolism; triacylglycerol biosynthesis. It functions in the pathway phospholipid metabolism; CDP-diacylglycerol biosynthesis; CDP-diacylglycerol from sn-glycerol 3-phosphate: step 1/3. With respect to regulation, inhibited by N-ethylmaleimide (NEM). Converts glycerol-3-phosphate to 1-acyl-sn-glycerol-3-phosphate (lysophosphatidic acid or LPA) by incorporating an acyl moiety at the sn-1 position of the glycerol backbone. Also converts LPA into 1,2-diacyl-sn-glycerol-3-phosphate (phosphatidic acid or PA) by incorporating an acyl moiety at the sn-2 position of the glycerol backbone. Protects cells against lipotoxicity. This Homo sapiens (Human) protein is Glycerol-3-phosphate acyltransferase 3.